A 241-amino-acid chain; its full sequence is Ras-like protein 1 (241 aa).

GTP is bound by residues 17 to 22 (GVGKTA), 33 to 39 (VETYDPT), 63 to 64 (AG), 138 to 141 (NKSD), and 168 to 170 (SAK). The short motif at 36–44 (YDPTIEDSY) is the Effector region element. The segment at 190 to 241 (RQQASRPSLPGNSRTKTGGMGKSESFYQSDGKRGSRKDGEKHRSKPIKCVIL) is disordered. Polar residues predominate over residues 191–205 (QQASRPSLPGNSRTK). Basic and acidic residues predominate over residues 219–230 (DGKRGSRKDGEK). Cysteine 238 carries the cysteine methyl ester modification. Cysteine 238 carries S-farnesyl cysteine lipidation. A propeptide spans 239-241 (VIL) (removed in mature form).

It belongs to the small GTPase superfamily. Ras family. In terms of assembly, interacts with farnesyltransferase beta subunit RAM1.

Its subcellular location is the cell membrane. Its activity is regulated as follows. Alternates between an inactive form bound to GDP and an active form bound to GTP. Activated by a guanine nucleotide-exchange factor (GEF) and inactivated by a GTPase-activating protein (GAP). Functionally, modulates the activity of the adenylate cyclase catalytic subunit and therefore affects the biosynthesis of cyclic-AMP. Plays a role in both surface attachment and surface recognition of appressoria, a highly specialized infection structure for plant penetration. Regulates appressorium formation by coordinated regulation of cAMP signaling and Pmk1 MAPK pathways. The protein is Ras-like protein 1 of Pyricularia oryzae (strain 70-15 / ATCC MYA-4617 / FGSC 8958) (Rice blast fungus).